We begin with the raw amino-acid sequence, 893 residues long: Translation initiation factor IF-2 (893 aa).

Positions 1 to 266 (MVDTKNPGDK…AKPAPSKQRG (266 aa)) are disordered. Over residues 59–70 (PADAPTAAAAAP) the composition is skewed to low complexity. Residues 71–92 (APAPAPVPSAAPRPAAPPPPSR) are compositionally biased toward pro residues. The segment covering 93-104 (PQQSRSQSPSRS) has biased composition (low complexity). 2 stretches are compositionally biased toward basic and acidic residues: residues 128–148 (ARVR…RRNS) and 155–196 (AERE…EAKR). Over residues 197-226 (PAAAATPAKSATPAARPTGAPAVRAPGVAA) the composition is skewed to low complexity. Positions 389 to 560 (PRSPVVTVMG…ALQAELLDLK (172 aa)) constitute a tr-type G domain. The interval 398-405 (GHVDHGKT) is G1. 398-405 (GHVDHGKT) is a binding site for GTP. The segment at 423–427 (GITQH) is G2. Residues 446–449 (DTPG) form a G3 region. Residues 446–450 (DTPGH) and 500–503 (NKID) contribute to the GTP site. The tract at residues 500 to 503 (NKID) is G4. Residues 536–538 (SAK) are G5.

Belongs to the TRAFAC class translation factor GTPase superfamily. Classic translation factor GTPase family. IF-2 subfamily.

The protein resides in the cytoplasm. Functionally, one of the essential components for the initiation of protein synthesis. Protects formylmethionyl-tRNA from spontaneous hydrolysis and promotes its binding to the 30S ribosomal subunits. Also involved in the hydrolysis of GTP during the formation of the 70S ribosomal complex. In Rhodopseudomonas palustris (strain BisA53), this protein is Translation initiation factor IF-2.